A 265-amino-acid polypeptide reads, in one-letter code: Metal-activated transcriptional activator protein AMT1 (265 aa).

The segment at residues 1–40 (MVVINGVKYACDSCIKSHKAAQCEHNDRPLKILKPRGRPP) is a DNA-binding region (copper-fist). Cys-11, Cys-14, Cys-23, and His-25 together coordinate Zn(2+). The disordered stretch occupies residues 103 to 129 (RRKRTQKSNKKDNLSINSPTNNSPSPA). Positions 119-128 (NSPTNNSPSP) are enriched in low complexity.

Its subcellular location is the nucleus. Trans-acting regulatory protein that activates transcription of the MT genes (metallothionein) in response to copper or silver ions. The sequence is that of Metal-activated transcriptional activator protein AMT1 (AMT1) from Candida glabrata (strain ATCC 2001 / BCRC 20586 / JCM 3761 / NBRC 0622 / NRRL Y-65 / CBS 138) (Yeast).